We begin with the raw amino-acid sequence, 286 residues long: Pantothenate synthetase (286 aa).

Residue 31 to 38 (MGALHDGH) participates in ATP binding. The active-site Proton donor is His-38. Residue Gln-62 coordinates (R)-pantoate. Position 62 (Gln-62) interacts with beta-alanine. 148–151 (GKKD) is a binding site for ATP. Residue Gln-154 participates in (R)-pantoate binding. ATP-binding positions include Val-177 and 185 to 188 (KSSR).

This sequence belongs to the pantothenate synthetase family. In terms of assembly, homodimer.

It localises to the cytoplasm. It catalyses the reaction (R)-pantoate + beta-alanine + ATP = (R)-pantothenate + AMP + diphosphate + H(+). It participates in cofactor biosynthesis; (R)-pantothenate biosynthesis; (R)-pantothenate from (R)-pantoate and beta-alanine: step 1/1. Its function is as follows. Catalyzes the condensation of pantoate with beta-alanine in an ATP-dependent reaction via a pantoyl-adenylate intermediate. In Staphylococcus carnosus (strain TM300), this protein is Pantothenate synthetase.